The following is a 439-amino-acid chain: tRNA modification GTPase MnmE (439 aa).

R20, E78, and K116 together coordinate (6S)-5-formyl-5,6,7,8-tetrahydrofolate. In terms of domain architecture, TrmE-type G spans 211–364 (GIYVAILGEP…LLSAIQKKVE (154 aa)). GTP contacts are provided by residues 221–226 (NSGKST), 240–246 (SEYAGTT), and 265–268 (DTAG). Mg(2+) is bound by residues S225 and T246. K439 contacts (6S)-5-formyl-5,6,7,8-tetrahydrofolate.

It belongs to the TRAFAC class TrmE-Era-EngA-EngB-Septin-like GTPase superfamily. TrmE GTPase family. As to quaternary structure, homodimer. Heterotetramer of two MnmE and two MnmG subunits. It depends on K(+) as a cofactor.

It localises to the cytoplasm. Exhibits a very high intrinsic GTPase hydrolysis rate. Involved in the addition of a carboxymethylaminomethyl (cmnm) group at the wobble position (U34) of certain tRNAs, forming tRNA-cmnm(5)s(2)U34. The sequence is that of tRNA modification GTPase MnmE from Ehrlichia ruminantium (strain Welgevonden).